The chain runs to 98 residues: Plastocyanin (98 aa).

The 98-residue stretch at 1-98 (AQIVKLGGDD…AGMKMTITVQ (98 aa)) folds into the Plastocyanin-like domain. 4 residues coordinate Cu cation: His38, Cys83, His86, and Met91.

It belongs to the plastocyanin family. The cofactor is Cu(2+).

The protein resides in the plastid. The protein localises to the chloroplast thylakoid membrane. Functionally, participates in electron transfer between P700 and the cytochrome b6-f complex in photosystem I. The protein is Plastocyanin (PETE) of Ulva arasakii (Sea lettuce).